Here is a 172-residue protein sequence, read N- to C-terminus: Crossover junction endodeoxyribonuclease RuvC (172 aa).

Residues Asp11, Glu71, and Asp143 contribute to the active site. Asp11, Glu71, and Asp143 together coordinate Mg(2+).

Belongs to the RuvC family. As to quaternary structure, homodimer which binds Holliday junction (HJ) DNA. The HJ becomes 2-fold symmetrical on binding to RuvC with unstacked arms; it has a different conformation from HJ DNA in complex with RuvA. In the full resolvosome a probable DNA-RuvA(4)-RuvB(12)-RuvC(2) complex forms which resolves the HJ. The cofactor is Mg(2+).

It is found in the cytoplasm. The enzyme catalyses Endonucleolytic cleavage at a junction such as a reciprocal single-stranded crossover between two homologous DNA duplexes (Holliday junction).. Its function is as follows. The RuvA-RuvB-RuvC complex processes Holliday junction (HJ) DNA during genetic recombination and DNA repair. Endonuclease that resolves HJ intermediates. Cleaves cruciform DNA by making single-stranded nicks across the HJ at symmetrical positions within the homologous arms, yielding a 5'-phosphate and a 3'-hydroxyl group; requires a central core of homology in the junction. The consensus cleavage sequence is 5'-(A/T)TT(C/G)-3'. Cleavage occurs on the 3'-side of the TT dinucleotide at the point of strand exchange. HJ branch migration catalyzed by RuvA-RuvB allows RuvC to scan DNA until it finds its consensus sequence, where it cleaves and resolves the cruciform DNA. This Brucella anthropi (strain ATCC 49188 / DSM 6882 / CCUG 24695 / JCM 21032 / LMG 3331 / NBRC 15819 / NCTC 12168 / Alc 37) (Ochrobactrum anthropi) protein is Crossover junction endodeoxyribonuclease RuvC.